Reading from the N-terminus, the 981-residue chain is Rab3 GTPase-activating protein catalytic subunit (981 aa).

Phosphoserine is present on residues serine 83, serine 379, serine 537, serine 579, serine 581, and serine 590. The tract at residues 592-613 (TEELKGNGQESGKKGGPKEMAN) is disordered. Serine 664 bears the Phosphoserine mark. Residue threonine 908 is modified to Phosphothreonine. The segment at 908–937 (TPPEEELKRMGSPEERRQNSVSDFPPPAGR) is disordered. Over residues 912 to 925 (EELKRMGSPEERRQ) the composition is skewed to basic and acidic residues.

This sequence belongs to the Rab3-GAP catalytic subunit family. As to quaternary structure, the Rab3 GTPase-activating complex is a heterodimer composed of RAB3GAP1 and RAB3GAP2. The Rab3 GTPase-activating complex interacts with DMXL2. Interacts with LMAN1. Ubiquitous.

The protein resides in the cytoplasm. It is found in the endoplasmic reticulum. It localises to the golgi apparatus. The protein localises to the cis-Golgi network. Functionally, catalytic subunit of the Rab3 GTPase-activating (Rab3GAP) complex composed of RAB3GAP1 and RAB3GAP2, which has GTPase-activating protein (GAP) activity towards various Rab3 subfamily members (RAB3A, RAB3B, RAB3C and RAB3D), RAB5A and RAB43, and guanine nucleotide exchange factor (GEF) activity towards RAB18. As part of the Rab3GAP complex, acts as a GAP for Rab3 proteins by converting active RAB3-GTP to the inactive form RAB3-GDP. Rab3 proteins are involved in regulated exocytosis of neurotransmitters and hormones. The Rab3GAP complex, acts as a GEF for RAB18 by promoting the conversion of inactive RAB18-GDP to the active form RAB18-GTP. Recruits and stabilizes RAB18 at the cis-Golgi membrane in fibroblasts where RAB18 is most likely activated. Also involved in RAB18 recruitment at the endoplasmic reticulum (ER) membrane where it maintains proper ER structure. Required for normal eye and brain development. May participate in neurodevelopmental processes such as proliferation, migration and differentiation before synapse formation, and non-synaptic vesicular release of neurotransmitters. The protein is Rab3 GTPase-activating protein catalytic subunit of Homo sapiens (Human).